Consider the following 188-residue polypeptide: MYMQVESRTGTLLHLKRNPSIRSWSLLVGISSVGLAAAYYSTDTWLWKLFYVAGCAFVALQNLEDWEEAIFDKKSGKAILITYSLYKKLLTLCKGGQEQVVVLLKEIRDVNVEEERVRYFGSGYVIVLRFVTGISHPLTQSAVLGARSDVEAVAKELTKFLEFDLVGSRPQAVEESNDSESDEALDTQ.

The chain crosses the membrane as a helical span at residues 20-42; the sequence is SIRSWSLLVGISSVGLAAAYYST.

Belongs to the CYBC1 family.

Its subcellular location is the endoplasmic reticulum membrane. Functions as a chaperone necessary for a stable expression of the CYBA and CYBB subunits of the cytochrome b-245 heterodimer. The protein is Cytochrome b-245 chaperone 1 homolog (cybc1) of Xenopus tropicalis (Western clawed frog).